We begin with the raw amino-acid sequence, 185 residues long: Signal peptidase I (185 aa).

The Cytoplasmic segment spans residues 1-20; the sequence is MKSEKEKTSKKSAVLDWAKA. Residues 21–41 form a helical membrane-spanning segment; that stretch reads IIIAVVLAVLIRNFLFAPYVV. At 42-185 the chain is on the extracellular side; it reads DGESMEPTLH…FPFNEIRKTK (144 aa). Residues Ser45 and Lys85 contribute to the active site.

This sequence belongs to the peptidase S26 family.

It localises to the cell membrane. It carries out the reaction Cleavage of hydrophobic, N-terminal signal or leader sequences from secreted and periplasmic proteins.. This chain is Signal peptidase I (sipA), found in Bacillus amyloliquefaciens (Bacillus velezensis).